The following is a 292-amino-acid chain: Transforming growth factor-beta receptor type 3-like protein (292 aa).

The first 16 residues, Met-1–Thr-16, serve as a signal peptide directing secretion. The ZP; truncated domain maps to Leu-17 to Pro-170. Residues Leu-17–Pro-244 are Extracellular-facing. A disulfide bond links Cys-85 and Cys-147. A disordered region spans residues Arg-160 to Ala-236. Pro residues-rich tracts occupy residues Pro-164–Arg-175 and Pro-213–Ser-222. A helical transmembrane segment spans residues Val-245–Leu-265. The Cytoplasmic segment spans residues Val-266–Gln-292. The disordered stretch occupies residues His-273–Gln-292. Low complexity predominate over residues Ala-281–Gln-292.

Post-translationally, glycosylated. In terms of tissue distribution, expressed in pituitary gland gonadotrope cells.

Its subcellular location is the cell membrane. Functionally, expressed in gonadotrope cells, acts as an inhibin B coreceptor and regulates follicle-stimulating hormone (FSH) levels and female fertility. The polypeptide is Transforming growth factor-beta receptor type 3-like protein (Homo sapiens (Human)).